The primary structure comprises 35 residues: Jingzhaotoxin F6-27.63 (35 aa).

Cystine bridges form between cysteine 2–cysteine 17, cysteine 9–cysteine 22, and cysteine 16–cysteine 29.

This sequence belongs to the neurotoxin 10 (Hwtx-1) family. 49 (Jztx-F6) subfamily. Expressed by the venom gland.

It localises to the secreted. Probable ion channel inhibitor. The sequence is that of Jingzhaotoxin F6-27.63 from Chilobrachys guangxiensis (Chinese earth tiger tarantula).